The following is a 328-amino-acid chain: Purple acid phosphatase 7 (328 aa).

A signal peptide spans 1 to 24 (MKMHVCFSVILMFLSIFFINGALS). D48 contacts Fe cation. A glycan (N-linked (GlcNAc...) asparagine) is linked at N56. The Fe cation site is built by D81 and Y84. D81 lines the Zn(2+) pocket. Positions 119 and 213 each coordinate Zn(2+). The Proton donor role is filled by H222. Residue H248 participates in Zn(2+) binding. Position 248–250 (248–250 (HDH)) interacts with substrate. H250 provides a ligand contact to Fe cation.

It belongs to the metallophosphoesterase superfamily. Purple acid phosphatase family. Homodimer. Fe cation serves as cofactor. It depends on Zn(2+) as a cofactor. In terms of tissue distribution, expressed in roots, stems, leaves, flowers and siliques.

It localises to the secreted. The enzyme catalyses a phosphate monoester + H2O = an alcohol + phosphate. This Arabidopsis thaliana (Mouse-ear cress) protein is Purple acid phosphatase 7 (PAP7).